The primary structure comprises 305 residues: Glycerol-3-phosphate dehydrogenase [NAD(P)+] (305 aa).

Residues F10, R29, and K87 each contribute to the NADPH site. Sn-glycerol 3-phosphate contacts are provided by K87, G115, and S117. Residue A119 participates in NADPH binding. Residues K170, D223, S233, R234, and N235 each contribute to the sn-glycerol 3-phosphate site. The Proton acceptor role is filled by K170. Position 234 (R234) interacts with NADPH. Position 255 (E255) interacts with NADPH.

It belongs to the NAD-dependent glycerol-3-phosphate dehydrogenase family.

It localises to the cytoplasm. It carries out the reaction sn-glycerol 3-phosphate + NAD(+) = dihydroxyacetone phosphate + NADH + H(+). The catalysed reaction is sn-glycerol 3-phosphate + NADP(+) = dihydroxyacetone phosphate + NADPH + H(+). It participates in membrane lipid metabolism; glycerophospholipid metabolism. Functionally, catalyzes the reduction of the glycolytic intermediate dihydroxyacetone phosphate (DHAP) to sn-glycerol 3-phosphate (G3P), the key precursor for phospholipid synthesis. The polypeptide is Glycerol-3-phosphate dehydrogenase [NAD(P)+] (Cereibacter sphaeroides (strain ATCC 17023 / DSM 158 / JCM 6121 / CCUG 31486 / LMG 2827 / NBRC 12203 / NCIMB 8253 / ATH 2.4.1.) (Rhodobacter sphaeroides)).